A 580-amino-acid polypeptide reads, in one-letter code: Arginine--tRNA ligase (580 aa).

Positions 131-141 (ANPTGPLHVGH) match the 'HIGH' region motif.

It belongs to the class-I aminoacyl-tRNA synthetase family. Monomer.

It localises to the cytoplasm. It catalyses the reaction tRNA(Arg) + L-arginine + ATP = L-arginyl-tRNA(Arg) + AMP + diphosphate. This is Arginine--tRNA ligase from Roseobacter denitrificans (strain ATCC 33942 / OCh 114) (Erythrobacter sp. (strain OCh 114)).